The sequence spans 297 residues: N-acetylmuramic acid 6-phosphate etherase (297 aa).

Residues 55-218 (AAAALTRGGR…STGAMVKCGK (164 aa)) form the SIS domain. E83 functions as the Proton donor in the catalytic mechanism. E114 is an active-site residue.

Belongs to the GCKR-like family. MurNAc-6-P etherase subfamily. As to quaternary structure, homodimer.

The catalysed reaction is N-acetyl-D-muramate 6-phosphate + H2O = N-acetyl-D-glucosamine 6-phosphate + (R)-lactate. Its pathway is amino-sugar metabolism; 1,6-anhydro-N-acetylmuramate degradation. It participates in amino-sugar metabolism; N-acetylmuramate degradation. The protein operates within cell wall biogenesis; peptidoglycan recycling. Functionally, specifically catalyzes the cleavage of the D-lactyl ether substituent of MurNAc 6-phosphate, producing GlcNAc 6-phosphate and D-lactate. Together with AnmK, is also required for the utilization of anhydro-N-acetylmuramic acid (anhMurNAc) either imported from the medium or derived from its own cell wall murein, and thus plays a role in cell wall recycling. This chain is N-acetylmuramic acid 6-phosphate etherase, found in Cronobacter sakazakii (strain ATCC BAA-894) (Enterobacter sakazakii).